The following is a 125-amino-acid chain: Cytochrome c2 (125 aa).

Positions 1–21 (MKAIKIAMVGAALVWSASAYA) are cleaved as a signal peptide. The region spanning 23–123 (GDPVKGEQVF…DVIAFLATQH (101 aa)) is the Cytochrome c domain. Heme c is bound by residues Cys35, Cys38, His39, and Met101.

It belongs to the cytochrome c family. Post-translationally, binds 1 heme c group covalently per subunit.

Functionally, cytochrome c2 is found mainly in purple, non-sulfur, photosynthetic bacteria where it functions as the electron donor to the oxidized bacteriochlorophyll in the photophosphorylation pathway. However, it may also have a role in the respiratory chain and is found in some non-photosynthetic bacteria. The polypeptide is Cytochrome c2 (Rhodomicrobium vannielii (strain ATCC 17100 / DSM 162 / LMG 4299 / NCIMB 10020 / ATH 3.1.1)).